Here is a 525-residue protein sequence, read N- to C-terminus: ESX-1 secretion-associated protein EspE (525 aa).

Disordered stretches follow at residues 244–341 (AVAG…PGAA) and 375–494 (ALQA…APVH). The span at 248–258 (DADDTTADDTA) shows a compositional bias: acidic residues. A compositionally biased stretch (basic and acidic residues) spans 274 to 286 (ETSKEDGQSRHEN). The segment covering 292 to 306 (SGGGGGATSGGGGGA) has biased composition (gly residues). 3 stretches are compositionally biased toward low complexity: residues 307–319 (PSSA…AGTP), 332–341 (TPTDAQPGAA), and 375–397 (ALQA…AAAP). Positions 411 to 440 (DPDAEGDKDSDKRDGEGKEDGTAPRDREST) are enriched in basic and acidic residues.

Its subcellular location is the cytoplasm. The chain is ESX-1 secretion-associated protein EspE from Mycolicibacterium smegmatis (strain ATCC 700084 / mc(2)155) (Mycobacterium smegmatis).